The primary structure comprises 131 residues: MFLLHTMIRVGDLDKSLQFYCDILGMNLLRKKDYPSGEFTLAFVGYGKESENAVIELTHNWGTDKYDLGNGFGHIALGVEDIYSTCDKIRDKGGKVVREPGPMKHGTTVIAFVEDPDGYKIELIQTSSKKD.

The VOC domain occupies 2–126 (FLLHTMIRVG…DGYKIELIQT (125 aa)). His-5 contacts Ni(2+). Arg-9 serves as a coordination point for substrate. Residue Glu-56 participates in Ni(2+) binding. Substrate contacts are provided by Asn-60 and His-74. 2 residues coordinate Ni(2+): His-74 and Glu-122. Glu-122 (proton donor/acceptor) is an active-site residue.

Belongs to the glyoxalase I family. Ni(2+) is required as a cofactor.

It catalyses the reaction (R)-S-lactoylglutathione = methylglyoxal + glutathione. It participates in secondary metabolite metabolism; methylglyoxal degradation; (R)-lactate from methylglyoxal: step 1/2. Functionally, catalyzes the conversion of hemimercaptal, formed from methylglyoxal and glutathione, to S-lactoylglutathione. The sequence is that of Probable lactoylglutathione lyase (gloA) from Synechocystis sp. (strain ATCC 27184 / PCC 6803 / Kazusa).